A 1193-amino-acid polypeptide reads, in one-letter code: Dynamin-like protein A (1193 aa).

A D1, associates with and fuses membranes, tethers lipsomes region spans residues 1-609; the sequence is MTDQNRKELL…AFRERVKRLE (609 aa). The interval 50-57 is G1 motif D1; sequence GHYSAGKS. The tract at residues 76 to 78 is G2 motif D1; sequence TSA. Residues 141–144 form a G3 motif D1 region; the sequence is DTPG. Positions 199 to 202 are G4 motif D1; it reads NQID. The tract at residues 561 to 1193 is D2, does not associate with membranes; that stretch reads MPKSEIKMEQ…WKNSDNTIKM (633 aa). A G1 motif D2 region spans residues 619–626; the sequence is GGFSSGKS. A G2 motif D2 region spans residues 645–647; it reads TTA. Residues 774-777 form a G3 motif D2 region; sequence DTPG. The G4 motif D2 stretch occupies residues 837–840; the sequence is NAAD.

This sequence belongs to the TRAFAC class dynamin-like GTPase superfamily. Dynamin/Fzo/YdjA family. In terms of assembly, homodimer in solution. Both D1 and D2 domains interact with YwpG, YneK interacts only with D1 while RNase Y (rny) only interacts with whole protein. Probably oligomerizes at damaged membrane sites. The cofactor is Mg(2+).

The protein localises to the cell membrane. It catalyses the reaction GTP + H2O = GDP + phosphate + H(+). Its function is as follows. Mediates lipid mixing of vesicles and full mixing of their contents in the absence and presence of GTP. Tethers and mixes small vesicles better than larger ones, indicating a curvature preference. GTP slows down DynA-mediated lipid fusion, perhaps controlling its activity. Prefers phospholipid composition close to the B.subtilis membrane; requires phosphatidylglycerol for fusion has no activity on pure phosphatidylethanolamine vesicles. Regulates membrane lipid diffusion. Required to prevent membrane damage when exposed to low levels of membrane-damaging antibiotics or to bacteriophage. Probably surveys the cell membrane for stress; localizes to sites of membrane damage (treatment with nisin) and forms foci in cells treated with pore-forming compounds (CCCP). May assist membrane repair, possibly by membrane tethering and fusion. Probably functions both in early and late cell division, affects the proper formation of the FtsZ ring. Plays a non-redundant role with flottilin (floT) in membrane dynamics and cell shape. Probably able to bend membranes. Tethers liposomes and mediates their fusion; this does not require GTPase activity or the presence of GTP. Both GTPase domains (dynamin-type G) are required for GTPase activity. Has intrinsic affinity for membranes and membrane distortion capability; causes tubulation and membrane distortion when expressed in a Drosophila cell line. This Bacillus subtilis (strain 168) protein is Dynamin-like protein A.